The sequence spans 349 residues: MSSLSGKVQTVLGPIHPEQLGRTLTHEHLSMTFECCYCPPPAHQGTLSDAPILMKNLFWVKQNPYSNKENLLLSQEIEAITEEIMIFKAAGGGSIVENTTTGISRDIKMLKKMAEETGVNIISGAGFYVDATHSSSTRSMTVEQLTEVLVNEVLQGADGTNIKCGIIGEIGCSWPLTESEKKVLQATAEAQSQLGCPVNIHPGRNSDAPFHIIQILQEAGADISKTVMSHLDRTIFDETKLLEFAKLGSYLEYDLFGTEMLNYQFNQAVDMPSDNDRIKMLRLLINEGYEDRIVVSHDIHTKNRLLKYGGHGYSHILNNIVPKMLVRGISQQCVDKILLENPKQWLTFK.

The a divalent metal cation site is built by histidine 26, histidine 28, glutamate 169, histidine 201, histidine 230, and aspartate 298.

It belongs to the metallo-dependent hydrolases superfamily. Phosphotriesterase family. A divalent metal cation is required as a cofactor.

Its subcellular location is the cytoplasm. It localises to the cytosol. It catalyses the reaction N-acetyltaurine + H2O = taurine + acetate. The catalysed reaction is N-propanoyltaurine + H2O = propanoate + taurine. The enzyme catalyses N-acetyl-L-methionine + H2O = L-methionine + acetate. It carries out the reaction N-acetyl-L-isoleucine + H2O = L-isoleucine + acetate. It catalyses the reaction N-acetyl-L-leucine + H2O = L-leucine + acetate. The catalysed reaction is N-acetyl-L-valine + H2O = L-valine + acetate. In terms of biological role, N-acetyltaurine hydrolase that catalyzes the hydrolysis of N-acetyltaurine into taurine and acetate. PTER also acts on other N-acetyl amino acids (Met, Ile, Leu, Val) and N-propionyltaurine, but at lower rates. The sequence is that of N-acetyltaurine hydrolase (pter) from Xenopus tropicalis (Western clawed frog).